We begin with the raw amino-acid sequence, 155 residues long: Anaerobic ribonucleoside-triphosphate reductase-activating protein (155 aa).

3 residues coordinate [4Fe-4S] cluster: Cys-26, Cys-30, and Cys-33. S-adenosyl-L-methionine-binding positions include Gly-32–Tyr-34 and Gly-74.

It belongs to the organic radical-activating enzymes family. In terms of assembly, forms a tetramer composed of two NrdD and two NrdG subunits. [4Fe-4S] cluster is required as a cofactor.

The protein localises to the cytoplasm. It carries out the reaction glycyl-[protein] + reduced [flavodoxin] + S-adenosyl-L-methionine = glycin-2-yl radical-[protein] + semiquinone [flavodoxin] + 5'-deoxyadenosine + L-methionine + H(+). Activation of anaerobic ribonucleoside-triphosphate reductase under anaerobic conditions by generation of an organic free radical, using S-adenosylmethionine and reduced flavodoxin as cosubstrates to produce 5'-deoxy-adenosine. The protein is Anaerobic ribonucleoside-triphosphate reductase-activating protein (nrdG) of Vibrio cholerae serotype O1 (strain ATCC 39315 / El Tor Inaba N16961).